We begin with the raw amino-acid sequence, 481 residues long: Proline--tRNA ligase (481 aa).

This sequence belongs to the class-II aminoacyl-tRNA synthetase family. ProS type 3 subfamily. In terms of assembly, homodimer.

The protein localises to the cytoplasm. It carries out the reaction tRNA(Pro) + L-proline + ATP = L-prolyl-tRNA(Pro) + AMP + diphosphate. In terms of biological role, catalyzes the attachment of proline to tRNA(Pro) in a two-step reaction: proline is first activated by ATP to form Pro-AMP and then transferred to the acceptor end of tRNA(Pro). The polypeptide is Proline--tRNA ligase (Chlorobium luteolum (strain DSM 273 / BCRC 81028 / 2530) (Pelodictyon luteolum)).